The following is a 410-amino-acid chain: Inositol hexakisphosphate kinase 3 (410 aa).

211 to 219 (PCVLDLKMG) provides a ligand contact to substrate. Positions 333–358 (QEPPERAPGSPHPHEAPQAAHGSSPG) are disordered.

This sequence belongs to the inositol phosphokinase (IPK) family. As to expression, detected in brain.

It is found in the cytoplasm. It catalyses the reaction 1D-myo-inositol hexakisphosphate + ATP = 5-diphospho-1D-myo-inositol 1,2,3,4,6-pentakisphosphate + ADP. The enzyme catalyses 1-diphospho-1D-myo-inositol 2,3,4,5,6-pentakisphosphate + ATP + H(+) = 1,5-bis(diphospho)-1D-myo-inositol 2,3,4,6-tetrakisphosphate + ADP. Its function is as follows. Converts inositol hexakisphosphate (InsP6) to diphosphoinositol pentakisphosphate (InsP7/PP-InsP5). Converts 1,3,4,5,6-pentakisphosphate (InsP5) to PP-InsP4. This chain is Inositol hexakisphosphate kinase 3 (IP6K3), found in Homo sapiens (Human).